The primary structure comprises 230 residues: Ephrin-A3 (230 aa).

The signal sequence occupies residues 1–22 (MAAAPLLLLLLLVPVPLLPLLA). An Ephrin RBD domain is found at 30–161 (GNRHAVYWNS…RMKVFVCCAS (132 aa)). N-linked (GlcNAc...) asparagine glycosylation is found at N38, N67, N84, and N92. 2 disulfide bridges follow: C63–C102 and C91–C150. A lipid anchor (GPI-anchor amidated glycine) is attached at G206. Positions 207–230 (TSPKREHLPLAVGIAFFLMTLLAS) are cleaved as a propeptide — removed in mature form.

Belongs to the ephrin family. As to quaternary structure, interacts with EPHA8; activates EPHA8. Expressed in myogenic progenitor cells.

It localises to the cell membrane. Cell surface GPI-bound ligand for Eph receptors, a family of receptor tyrosine kinases which are crucial for migration, repulsion and adhesion during neuronal, vascular and epithelial development. Binds promiscuously Eph receptors residing on adjacent cells, leading to contact-dependent bidirectional signaling into neighboring cells. The signaling pathway downstream of the receptor is referred to as forward signaling while the signaling pathway downstream of the ephrin ligand is referred to as reverse signaling. The chain is Ephrin-A3 (Efna3) from Mus musculus (Mouse).